Reading from the N-terminus, the 142-residue chain is Small ribosomal subunit protein eS6 (142 aa).

The interval 117-142 is disordered; sequence EKPLDELAPKKEKKEGAAGGRAPAKK. A compositionally biased stretch (basic and acidic residues) spans 118 to 132; sequence KPLDELAPKKEKKEG.

Belongs to the eukaryotic ribosomal protein eS6 family.

In Methanocella arvoryzae (strain DSM 22066 / NBRC 105507 / MRE50), this protein is Small ribosomal subunit protein eS6.